The following is an 882-amino-acid chain: Alanine--tRNA ligase (882 aa).

Zn(2+)-binding residues include H570, H574, C672, and H676.

The protein belongs to the class-II aminoacyl-tRNA synthetase family. Requires Zn(2+) as cofactor.

The protein resides in the cytoplasm. It catalyses the reaction tRNA(Ala) + L-alanine + ATP = L-alanyl-tRNA(Ala) + AMP + diphosphate. Functionally, catalyzes the attachment of alanine to tRNA(Ala) in a two-step reaction: alanine is first activated by ATP to form Ala-AMP and then transferred to the acceptor end of tRNA(Ala). Also edits incorrectly charged Ser-tRNA(Ala) and Gly-tRNA(Ala) via its editing domain. The chain is Alanine--tRNA ligase from Xanthomonas campestris pv. campestris (strain 8004).